The chain runs to 635 residues: Two-component response regulator ARR18 (635 aa).

Positions 19–133 (RVLAVDDNPT…ELQNIWHHVV (115 aa)) constitute a Response regulatory domain. Aspartate 70 is modified (4-aspartylphosphate). Disordered stretches follow at residues 144–196 (LPPS…KKPR) and 323–342 (IQQG…GTYH). Acidic residues predominate over residues 166 to 186 (SGDEDDSDREEDDGEGSEQDG). The Nuclear localization signal signature appears at 193–196 (KKPR). The segment at residues 196–246 (RVVWSQELHQKFVSAVQQLGLDKAVPKKILDLMSIEGLTRENVASHLQKYR) is a DNA-binding region (myb-like GARP).

Belongs to the ARR family. Type-B subfamily. As to quaternary structure, binds the target DNA as a monomer. Two-component system major event consists of a His-to-Asp phosphorelay between a sensor histidine kinase (HK) and a response regulator (RR). In plants, the His-to-Asp phosphorelay involves an additional intermediate named Histidine-containing phosphotransfer protein (HPt). This multistep phosphorelay consists of a His-Asp-His-Asp sequential transfer of a phosphate group between first a His and an Asp of the HK protein, followed by the transfer to a conserved His of the HPt protein and finally the transfer to an Asp in the receiver domain of the RR protein. In terms of tissue distribution, predominantly expressed in young leaf tissue developing anthers, and siliques.

It is found in the nucleus. Transcriptional activator that binds specifically to the DNA sequence 5'-[AG]GATT-3'. Functions as a response regulator involved in His-to-Asp phosphorelay signal transduction system. Phosphorylation of the Asp residue in the receiver domain activates the ability of the protein to promote the transcription of target genes. Could directly activate some type-A response regulators in response to cytokinins. This Arabidopsis thaliana (Mouse-ear cress) protein is Two-component response regulator ARR18 (ARR18).